We begin with the raw amino-acid sequence, 104 residues long: Nucleoid-associated protein Amuc_1227 (104 aa).

It belongs to the YbaB/EbfC family. In terms of assembly, homodimer.

It localises to the cytoplasm. It is found in the nucleoid. Binds to DNA and alters its conformation. May be involved in regulation of gene expression, nucleoid organization and DNA protection. This is Nucleoid-associated protein Amuc_1227 from Akkermansia muciniphila (strain ATCC BAA-835 / DSM 22959 / JCM 33894 / BCRC 81048 / CCUG 64013 / CIP 107961 / Muc).